A 36-amino-acid chain; its full sequence is Photosystem I reaction center subunit VIII (36 aa).

The chain crosses the membrane as a helical span at residues 10-30; sequence FVPLVGLVFSAIIMVLSFLYI.

The protein belongs to the PsaI family.

The protein localises to the plastid. It is found in the chloroplast thylakoid membrane. Its function is as follows. May help in the organization of the PsaL subunit. In Welwitschia mirabilis (Tree tumbo), this protein is Photosystem I reaction center subunit VIII.